The primary structure comprises 892 residues: Integrator complex subunit 6 (892 aa).

Residues 3 to 227 (ILLFLIDTSA…QCLESLVQKV (225 aa)) form the VWFA domain. The short motif at 630–637 (MMIDEADE) is the Inhibitory loop element. 3 disordered regions span residues 665–692 (MSPL…GTQG), 711–754 (VGGT…AAPD), and 771–793 (PDHT…EVNE).

The protein belongs to the Integrator subunit 6 family. As to quaternary structure, component of the Integrator complex, composed of core subunits INTS1, INTS2, INTS3, INTS4, INTS5, INTS6, INTS7, INTS8, INTS9/RC74, INTS10, INTS11/CPSF3L, INTS12, INTS13, INTS14 and INTS15. The core complex associates with protein phosphatase 2A subunits PPP2CA and PPP2R1A, to form the Integrator-PP2A (INTAC) complex.

It localises to the nucleus. The protein resides in the chromosome. Its function is as follows. Component of the integrator complex, a multiprotein complex that terminates RNA polymerase II (Pol II) transcription in the promoter-proximal region of genes. The integrator complex provides a quality checkpoint during transcription elongation by driving premature transcription termination of transcripts that are unfavorably configured for transcriptional elongation: the complex terminates transcription by (1) catalyzing dephosphorylation of the C-terminal domain (CTD) of Pol II subunit POLR2A/RPB1 and SUPT5H/SPT5, (2) degrading the exiting nascent RNA transcript via endonuclease activity and (3) promoting the release of Pol II from bound DNA. The integrator complex is also involved in terminating the synthesis of non-coding Pol II transcripts, such as enhancer RNAs (eRNAs), small nuclear RNAs (snRNAs), telomerase RNAs and long non-coding RNAs (lncRNAs). Within the integrator complex, INTS6 acts as a molecular adapter that promotes assembly of protein phosphatase 2A (PP2A) subunits to the integrator core complex, promoting recruitment of PP2A to transcription pause-release checkpoint. The polypeptide is Integrator complex subunit 6 (ints6l) (Danio rerio (Zebrafish)).